Consider the following 292-residue polypeptide: Short chain dehydrogenase/reductase CPUR_05418 (292 aa).

Positions 44 and 156 each coordinate NADP(+). Active-site proton donor residues include serine 172 and tyrosine 186. Residues tyrosine 186, lysine 190, isoleucine 221, and threonine 223 each coordinate NADP(+). The Lowers pKa of active site Tyr role is filled by lysine 190.

This sequence belongs to the short-chain dehydrogenases/reductases (SDR) family.

Its pathway is secondary metabolite biosynthesis. Its function is as follows. Short chain dehydrogenase/reductase; part of the ergochrome gene cluster responsible for the typical purple-black color of the ergot sclerotia. The ergochrome gene cluster produces several ergot pigments including the yellow ergochrome secalonic acid and its derivatives, as well as the red anthraquinones endocrocin and clavorubin. The pathway begins with the synthesis of atrochrysone thioester by the polyketide synthase (PKS) CPUR_05437. The atrochrysone carboxyl ACP thioesterase CPUR_05436 then breaks the thioester bond and releases the atrochrysone carboxylic acid from CPUR_05437. The atrochrysone carboxylic acid is then converted to atrochrysone which is further transformed into emodin anthrone. The next step is performed by the anthrone oxygenase CPUR_05434 that catalyzes the oxidation of emodinanthrone to emodin. Emodin is further modified to yield monodictyphenone via several steps involving CPUR_05427, CPUR_05428, CPUR_05429 and CPUR_05430. The short chain dehydrogenase/reductase CPUR_05418 then catalyzes the C-5 ketoreduction to give the xanthone skeleton of the monomeric units. Ergochromes formation requires further dimerization steps of different xanthone units, probably catalyzed by the cytochrome P450 monooxygenase CPUR_05419. CPUR_05425, CPUR_05426 and CPUR_05431 are unique to Claviceps, thus it is likely that they are involved in further modification of xanthone units or in their dimerization. The yellow ergochromes and the red anthraquinone pigments endocrocin and clavorubin are products from the same PKS derived precursors and the latter are likely shunt products in the pathway of xanthone biosynthesis. It is proposed that atrochrysone carboxylic acid released from the PKS CPUR_05437 can also be converted to endocrocin anthrone which is further oxidized into endocrocin by CPUR_05435. Endocrocin could be then modified to clavorubin, possibly by CPUR_05423 and CPUR_05431. Clavorubin is the principal anthraquinone metabolite produced by the cluster with a much higher yield compared to endocrocin. The protein is Short chain dehydrogenase/reductase CPUR_05418 of Claviceps purpurea (strain 20.1) (Ergot fungus).